The sequence spans 470 residues: Light-independent protochlorophyllide reductase subunit N (470 aa).

The [4Fe-4S] cluster site is built by cysteine 23, cysteine 48, and cysteine 108.

This sequence belongs to the BchN/ChlN family. In terms of assembly, protochlorophyllide reductase is composed of three subunits; ChlL, ChlN and ChlB. Forms a heterotetramer of two ChlB and two ChlN subunits. [4Fe-4S] cluster is required as a cofactor.

It is found in the plastid. It localises to the chloroplast. It catalyses the reaction chlorophyllide a + oxidized 2[4Fe-4S]-[ferredoxin] + 2 ADP + 2 phosphate = protochlorophyllide a + reduced 2[4Fe-4S]-[ferredoxin] + 2 ATP + 2 H2O. It functions in the pathway porphyrin-containing compound metabolism; chlorophyll biosynthesis (light-independent). In terms of biological role, component of the dark-operative protochlorophyllide reductase (DPOR) that uses Mg-ATP and reduced ferredoxin to reduce ring D of protochlorophyllide (Pchlide) to form chlorophyllide a (Chlide). This reaction is light-independent. The NB-protein (ChlN-ChlB) is the catalytic component of the complex. The chain is Light-independent protochlorophyllide reductase subunit N from Zygnema circumcarinatum (Green alga).